The sequence spans 429 residues: MQSARRHLNTIFILDFGSQYTYVLAKQVRKLFVYCEVLPWNISVQCLKERAPLGIILSGGPHSVYENKAPHLDPEIYKLGIPILAICYGMQLMARDFGGTVSPGVGEFGYTPIHLYPCELFKHIVDCESLDTEIRMSHRDHVTTIPEGFNVIASTSQCSISGIENTKQRLYGLQFHPEVSDSTPTGNKILETFVQEICSAPTLWNPLYIQQDLVSKIQDTVIEVFDEVAQSLDVQWLAQGTIYSDVIESSRSGHASEVIKSHHNVGGLPKNLKLKLVEPLRYLFKDEVRILGEALGLSSYLLDRHPFPGPGLTIRVIGEILPEYLAILRRADLIFIEELRKAKLYDKISQAFALFLPIKSVSVKGDCRSYGYTIALRAVESTDFMTGRWAYLPCDVLSSCSSRIINEIPEVSRVVYDISDKPPATIEWE.

In terms of domain architecture, Glutamine amidotransferase type-1 spans 10–118; it reads TIFILDFGSQ…GYTPIHLYPC (109 aa). Cysteine 87 acts as the Nucleophile in catalysis. One can recognise a GMPS ATP-PPase domain in the interval 119–304; it reads ELFKHIVDCE…LGLSSYLLDR (186 aa). Catalysis depends on residues histidine 176 and glutamate 178.

As to quaternary structure, homodimer.

It carries out the reaction XMP + L-glutamine + ATP + H2O = GMP + L-glutamate + AMP + diphosphate + 2 H(+). Its pathway is purine metabolism; GMP biosynthesis; GMP from XMP (L-Gln route): step 1/1. Catalyzes the synthesis of GMP from XMP. The chain is Putative GMP synthase [glutamine-hydrolyzing] (guaA) from Chlamydia pneumoniae (Chlamydophila pneumoniae).